The primary structure comprises 142 residues: 3-hydroxyacyl-[acyl-carrier-protein] dehydratase FabZ (142 aa).

Histidine 47 is an active-site residue.

The protein belongs to the thioester dehydratase family. FabZ subfamily.

The protein resides in the cytoplasm. The enzyme catalyses a (3R)-hydroxyacyl-[ACP] = a (2E)-enoyl-[ACP] + H2O. Involved in unsaturated fatty acids biosynthesis. Catalyzes the dehydration of short chain beta-hydroxyacyl-ACPs and long chain saturated and unsaturated beta-hydroxyacyl-ACPs. The sequence is that of 3-hydroxyacyl-[acyl-carrier-protein] dehydratase FabZ from Coxiella burnetii (strain RSA 331 / Henzerling II).